The sequence spans 396 residues: MTEHNIRNFSINFGPQHPAAHGVLRLVLELDGEVVERVDPHIGLLHRGTEKLIEHKTYLQATPYFDRLDYVAPMNQEHAFCLAIERLAGIEVPRRAQLIRTLFCEIGRLLSHLLNVTTQAMDVGALTPPLWGFEEREKLMIFYERASGARLHANYFRPGGVHQDLPPALIDDIEAFCDPFLKVVDDLDNLVMANRIFKQRNVDIGIVSVDEAMAWGFSGVMVRGSGIPWDLRKSQPYELYEEMEFDIPVGKNGDTYDRQVIRMEEMRESVKIMRQCVAKLREPAGQGPIASIDGKFAPPPRREMKRSMEALIHHFKLYTEGFHVPEGEVYAAVEAPKGEFGVYLVSDGTNKPYRCKIRAPGFAHLQAMDWMCRGHLLADVSCVLGTLDIVFGEVDR.

Belongs to the complex I 49 kDa subunit family. As to quaternary structure, NDH-1 is composed of 14 different subunits. Subunits NuoB, C, D, E, F, and G constitute the peripheral sector of the complex.

The protein resides in the cell inner membrane. The enzyme catalyses a quinone + NADH + 5 H(+)(in) = a quinol + NAD(+) + 4 H(+)(out). Functionally, NDH-1 shuttles electrons from NADH, via FMN and iron-sulfur (Fe-S) centers, to quinones in the respiratory chain. The immediate electron acceptor for the enzyme in this species is believed to be ubiquinone. Couples the redox reaction to proton translocation (for every two electrons transferred, four hydrogen ions are translocated across the cytoplasmic membrane), and thus conserves the redox energy in a proton gradient. This chain is NADH-quinone oxidoreductase subunit D, found in Methylorubrum extorquens (strain PA1) (Methylobacterium extorquens).